The following is a 464-amino-acid chain: Chromosomal replication initiator protein DnaA (464 aa).

The tract at residues 1-82 is domain I, interacts with DnaA modulators; that stretch reads MKNAAELWHN…GSRLDIQFIE (82 aa). The segment at 82-125 is domain II; it reads EEGQAKHMLDRQNEEVEVMEVAPAKTKAQKTPKSSDELVMSELG. The domain III, AAA+ region stretch occupies residues 126-342; sequence QLNEKYTFDT…GALTRVIAYA (217 aa). Residues Gly-170, Gly-172, Lys-173, and Thr-174 each contribute to the ATP site. Positions 343–464 are domain IV, binds dsDNA; the sequence is NLVGRTIDPN…EQIKHELKHS (122 aa).

Belongs to the DnaA family. Oligomerizes as a right-handed, spiral filament on DNA at oriC.

The protein localises to the cytoplasm. Its function is as follows. Plays an essential role in the initiation and regulation of chromosomal replication. ATP-DnaA binds to the origin of replication (oriC) to initiate formation of the DNA replication initiation complex once per cell cycle. Binds the DnaA box (a 9 base pair repeat at the origin) and separates the double-stranded (ds)DNA. Forms a right-handed helical filament on oriC DNA; dsDNA binds to the exterior of the filament while single-stranded (ss)DNA is stabiized in the filament's interior. The ATP-DnaA-oriC complex binds and stabilizes one strand of the AT-rich DNA unwinding element (DUE), permitting loading of DNA polymerase. After initiation quickly degrades to an ADP-DnaA complex that is not apt for DNA replication. Binds acidic phospholipids. This chain is Chromosomal replication initiator protein DnaA, found in Exiguobacterium sibiricum (strain DSM 17290 / CCUG 55495 / CIP 109462 / JCM 13490 / 255-15).